Consider the following 226-residue polypeptide: uncharacterized protein (226 aa).

This sequence belongs to the HisA/HisF family.

This is an uncharacterized protein from Methanocaldococcus jannaschii (strain ATCC 43067 / DSM 2661 / JAL-1 / JCM 10045 / NBRC 100440) (Methanococcus jannaschii).